Consider the following 343-residue polypeptide: F17c-G fimbrial adhesin (343 aa).

An N-terminal signal peptide occupies residues 1–22 (MTNFYKVFLAVFILVCCNISHA). Residues 23 to 199 (AVSFIGSTEN…LNPFTLNDTV (177 aa)) form a receptor-binding lectin domain region. A carbohydrate contacts are provided by residues 65-66 (AN), 110-111 (DT), and 138-141 (STQG). A disulfide bridge links Cys-75 with Cys-132. The tract at residues 200–343 (TSCRLLTPSA…GISTFTFSYQ (144 aa)) is fimbrillin-binding domain. The segment at 287-307 (LKFGPDSPVKGNENQWQLSTG) is disordered. A compositionally biased stretch (polar residues) spans 298 to 307 (NENQWQLSTG).

It belongs to the fimbrial protein family.

It localises to the fimbrium. Essential fimbrial adhesion factor that mediates binding to N-acetylglucosamine-containing receptors in the host intestinal microvilli, leading to colonization of the intestinal tissue, and diarrhea or septicemia. Also confers adhesiveness to laminin and basement membranes. This is F17c-G fimbrial adhesin (f17cG) from Escherichia coli.